A 175-amino-acid chain; its full sequence is Disulfide bond formation protein B 2 (175 aa).

The Cytoplasmic portion of the chain corresponds to 1 to 9; it reads MYLARTRFL. A helical transmembrane segment spans residues 10-26; the sequence is FFLASLACASIIGTAFY. Over 27-44 the chain is Periplasmic; it reads LQQTFGLDPCFLCLIQRA. Cys36 and Cys39 form a disulfide bridge. The chain crosses the membrane as a helical span at residues 45–61; that stretch reads AIIACGVLALCAACHAP. At 62-68 the chain is on the cytoplasmic side; sequence GPTGMRR. Residues 69–85 traverse the membrane as a helical segment; that stretch reads YSLGFLLIALTGLVTAG. Residues 86–142 are Periplasmic-facing; the sequence is AQVWLQTASADQLIPFITKLEHLLSLLSLDMCIDRLRSDAMFCAEITWTLFGISLPE. A helical membrane pass occupies residues 143-161; the sequence is WSLLAFTGLALLPLYPLFS. Residues 162-175 are Cytoplasmic-facing; sequence EFSHWLATKDRARY.

Belongs to the DsbB family.

The protein localises to the cell inner membrane. Functionally, required for disulfide bond formation in some periplasmic proteins. Acts by oxidizing the DsbA protein. In Pseudomonas savastanoi pv. phaseolicola (strain 1448A / Race 6) (Pseudomonas syringae pv. phaseolicola (strain 1448A / Race 6)), this protein is Disulfide bond formation protein B 2.